A 144-amino-acid polypeptide reads, in one-letter code: Large ribosomal subunit protein uL15 (144 aa).

Positions 1-58 (MRLNELAPEPGSRPSAKRVGRGIGSGLGKTGGRGHKGLKSRSGGSVAPGFEGGQQPLA) are disordered. Positions 21–31 (RGIGSGLGKTG) are enriched in gly residues.

This sequence belongs to the universal ribosomal protein uL15 family. As to quaternary structure, part of the 50S ribosomal subunit.

Its function is as follows. Binds to the 23S rRNA. In Marinobacter nauticus (strain ATCC 700491 / DSM 11845 / VT8) (Marinobacter aquaeolei), this protein is Large ribosomal subunit protein uL15.